Reading from the N-terminus, the 238-residue chain is Deoxyribose-phosphate aldolase (238 aa).

The active-site Proton donor/acceptor is Asp104. The active-site Schiff-base intermediate with acetaldehyde is Lys168. Lys197 acts as the Proton donor/acceptor in catalysis.

Belongs to the DeoC/FbaB aldolase family. DeoC type 1 subfamily.

The protein resides in the cytoplasm. The catalysed reaction is 2-deoxy-D-ribose 5-phosphate = D-glyceraldehyde 3-phosphate + acetaldehyde. Its pathway is carbohydrate degradation; 2-deoxy-D-ribose 1-phosphate degradation; D-glyceraldehyde 3-phosphate and acetaldehyde from 2-deoxy-alpha-D-ribose 1-phosphate: step 2/2. In terms of biological role, catalyzes a reversible aldol reaction between acetaldehyde and D-glyceraldehyde 3-phosphate to generate 2-deoxy-D-ribose 5-phosphate. The sequence is that of Deoxyribose-phosphate aldolase from Bacteroides thetaiotaomicron (strain ATCC 29148 / DSM 2079 / JCM 5827 / CCUG 10774 / NCTC 10582 / VPI-5482 / E50).